The sequence spans 233 residues: uncharacterized protein (233 aa).

The next 3 helical transmembrane spans lie at 78–98 (FCLIIISSWAVLPVPGGPVMY), 113–133 (FITCSYSAVLAGNAPSLLFKL), and 188–208 (FLLIRLVGVIGIADMNVYGTI).

It is found in the membrane. This is an uncharacterized protein from Saccharomyces cerevisiae (strain ATCC 204508 / S288c) (Baker's yeast).